Reading from the N-terminus, the 322-residue chain is Ferredoxin--NADP reductase (322 aa).

FAD is bound by residues aspartate 33, glutamine 41, tyrosine 46, alanine 86, phenylalanine 120, aspartate 278, and serine 319.

It belongs to the ferredoxin--NADP reductase type 2 family. In terms of assembly, homodimer. The cofactor is FAD.

It catalyses the reaction 2 reduced [2Fe-2S]-[ferredoxin] + NADP(+) + H(+) = 2 oxidized [2Fe-2S]-[ferredoxin] + NADPH. In Salinispora tropica (strain ATCC BAA-916 / DSM 44818 / JCM 13857 / NBRC 105044 / CNB-440), this protein is Ferredoxin--NADP reductase.